Consider the following 218-residue polypeptide: Glutathione S-transferase Y1 (218 aa).

The region spanning P2–G88 is the GST N-terminal domain. Residues Y7–W8, W46–K50, N59–L60, and Q72–S73 contribute to the glutathione site. Residues T90 to I208 enclose the GST C-terminal domain. Substrate is bound at residue Y116.

This sequence belongs to the GST superfamily. Mu family. As to quaternary structure, homodimer.

It localises to the cytoplasm. It catalyses the reaction RX + glutathione = an S-substituted glutathione + a halide anion + H(+). In terms of biological role, conjugation of reduced glutathione to a wide number of exogenous and endogenous hydrophobic electrophiles. The polypeptide is Glutathione S-transferase Y1 (Cricetulus longicaudatus (Long-tailed dwarf hamster)).